The chain runs to 146 residues: Cytochrome c' (146 aa).

A signal peptide spans 1-21; sequence MKLRIATIAGLVVLGSGFAVA. Heme c-binding residues include R29, T86, A87, C134, C137, and H138.

In terms of assembly, monomer. In terms of processing, binds 1 heme c group covalently per subunit.

Its function is as follows. Cytochrome c' is the most widely occurring bacterial c-type cytochrome. Cytochromes c' are high-spin proteins and the heme has no sixth ligand. Their exact function is not known. In Rhodopseudomonas palustris (strain ATCC BAA-98 / CGA009), this protein is Cytochrome c' (cycA).